The primary structure comprises 218 residues: Pyrrolidone-carboxylate peptidase 2 (218 aa).

Residues Glu83, Cys146, and His170 contribute to the active site.

Belongs to the peptidase C15 family. As to quaternary structure, homotetramer.

Its subcellular location is the cytoplasm. It catalyses the reaction Release of an N-terminal pyroglutamyl group from a polypeptide, the second amino acid generally not being Pro.. Removes 5-oxoproline from various penultimate amino acid residues except L-proline. This Photorhabdus laumondii subsp. laumondii (strain DSM 15139 / CIP 105565 / TT01) (Photorhabdus luminescens subsp. laumondii) protein is Pyrrolidone-carboxylate peptidase 2.